The primary structure comprises 349 residues: tRNA pseudouridine synthase D (349 aa).

F27 is a substrate binding site. D80 functions as the Nucleophile in the catalytic mechanism. Residue N129 coordinates substrate. Positions 155–303 (GVPNYFGAQR…VEAARRAMLL (149 aa)) constitute a TRUD domain. F329 serves as a coordination point for substrate.

Belongs to the pseudouridine synthase TruD family.

The catalysed reaction is uridine(13) in tRNA = pseudouridine(13) in tRNA. Its function is as follows. Responsible for synthesis of pseudouridine from uracil-13 in transfer RNAs. The sequence is that of tRNA pseudouridine synthase D from Escherichia coli (strain SE11).